Consider the following 140-residue polypeptide: Nucleoside diphosphate kinase (140 aa).

ATP is bound by residues lysine 11, phenylalanine 59, arginine 87, threonine 93, arginine 104, and asparagine 114. Catalysis depends on histidine 117, which acts as the Pros-phosphohistidine intermediate.

It belongs to the NDK family. As to quaternary structure, homotetramer. It depends on Mg(2+) as a cofactor.

It is found in the cytoplasm. The enzyme catalyses a 2'-deoxyribonucleoside 5'-diphosphate + ATP = a 2'-deoxyribonucleoside 5'-triphosphate + ADP. The catalysed reaction is a ribonucleoside 5'-diphosphate + ATP = a ribonucleoside 5'-triphosphate + ADP. Its function is as follows. Major role in the synthesis of nucleoside triphosphates other than ATP. The ATP gamma phosphate is transferred to the NDP beta phosphate via a ping-pong mechanism, using a phosphorylated active-site intermediate. The chain is Nucleoside diphosphate kinase from Rhizorhabdus wittichii (strain DSM 6014 / CCUG 31198 / JCM 15750 / NBRC 105917 / EY 4224 / RW1) (Sphingomonas wittichii).